A 487-amino-acid polypeptide reads, in one-letter code: Phenylalanine--tRNA ligase alpha subunit (487 aa).

Residues Thr319, 361–363 (QVE), and Tyr401 each bind L-phenylalanine. Glu403 is a Mg(2+) binding site. Residue Phe427 coordinates L-phenylalanine.

This sequence belongs to the class-II aminoacyl-tRNA synthetase family. Phe-tRNA synthetase alpha subunit type 2 subfamily. Tetramer of two alpha and two beta subunits. It depends on Mg(2+) as a cofactor.

The protein localises to the cytoplasm. The catalysed reaction is tRNA(Phe) + L-phenylalanine + ATP = L-phenylalanyl-tRNA(Phe) + AMP + diphosphate + H(+). In Dictyostelium discoideum (Social amoeba), this protein is Phenylalanine--tRNA ligase alpha subunit (phesA).